The following is a 181-amino-acid chain: Large ribosomal subunit protein uL10 (181 aa).

The protein belongs to the universal ribosomal protein uL10 family. Part of the ribosomal stalk of the 50S ribosomal subunit. The N-terminus interacts with L11 and the large rRNA to form the base of the stalk. The C-terminus forms an elongated spine to which L12 dimers bind in a sequential fashion forming a multimeric L10(L12)X complex.

In terms of biological role, forms part of the ribosomal stalk, playing a central role in the interaction of the ribosome with GTP-bound translation factors. This chain is Large ribosomal subunit protein uL10, found in Amoebophilus asiaticus (strain 5a2).